Reading from the N-terminus, the 158-residue chain is MLP-like protein 43 (158 aa).

N-acetylalanine is present on alanine 2.

It belongs to the MLP family.

The sequence is that of MLP-like protein 43 (MLP43) from Arabidopsis thaliana (Mouse-ear cress).